The primary structure comprises 602 residues: T-box transcription factor TBX15 (602 aa).

The tract at residues 46–84 (ALSPAGPLGDTEDAAAHGLEPHPDSEQSTGSDSEVLTER) is disordered. The span at 71 to 84 (EQSTGSDSEVLTER) shows a compositional bias: polar residues. Residues 122–304 (LWKRFHDIGT…RNPFAKGFRD (183 aa)) constitute a DNA-binding region (T-box). The residue at position 330 (Thr-330) is a Phosphothreonine. Disordered regions lie at residues 338–369 (QKQQ…LSPS) and 425–447 (QSGT…PSLI). Positions 346-369 (GTSPTTSSTGTPSPSASSHLLSPS) are enriched in low complexity. Residues 425–446 (QSGTTSATQPSETFMPQRTPSL) are compositionally biased toward polar residues.

Can form a heterodimer with TBX18.

The protein resides in the nucleus. Its function is as follows. Probable transcriptional regulator involved in the development of the skeleton of the limb, vertebral column and head. Acts by controlling the number of mesenchymal precursor cells and chondrocytes. The polypeptide is T-box transcription factor TBX15 (TBX15) (Homo sapiens (Human)).